A 275-amino-acid chain; its full sequence is Dermonecrotic toxin LarSicTox-alphaIII1 (275 aa).

The active site involves H5. Positions 25 and 27 each coordinate Mg(2+). The active-site Nucleophile is the H41. 2 disulfides stabilise this stretch: C45-C51 and C47-C190. D85 contributes to the Mg(2+) binding site. A glycan (N-linked (GlcNAc...) asparagine) is linked at N252.

This sequence belongs to the arthropod phospholipase D family. Class II subfamily. It depends on Mg(2+) as a cofactor. Expressed by the venom gland.

It is found in the secreted. The catalysed reaction is an N-(acyl)-sphingosylphosphocholine = an N-(acyl)-sphingosyl-1,3-cyclic phosphate + choline. It catalyses the reaction an N-(acyl)-sphingosylphosphoethanolamine = an N-(acyl)-sphingosyl-1,3-cyclic phosphate + ethanolamine. It carries out the reaction a 1-acyl-sn-glycero-3-phosphocholine = a 1-acyl-sn-glycero-2,3-cyclic phosphate + choline. The enzyme catalyses a 1-acyl-sn-glycero-3-phosphoethanolamine = a 1-acyl-sn-glycero-2,3-cyclic phosphate + ethanolamine. Dermonecrotic toxins cleave the phosphodiester linkage between the phosphate and headgroup of certain phospholipids (sphingolipid and lysolipid substrates), forming an alcohol (often choline) and a cyclic phosphate. This toxin acts on sphingomyelin (SM). It may also act on ceramide phosphoethanolamine (CPE), lysophosphatidylcholine (LPC) and lysophosphatidylethanolamine (LPE), but not on lysophosphatidylserine (LPS), and lysophosphatidylglycerol (LPG). It acts by transphosphatidylation, releasing exclusively cyclic phosphate products as second products. Induces dermonecrosis, hemolysis, increased vascular permeability, edema, inflammatory response, and platelet aggregation. This is Dermonecrotic toxin LarSicTox-alphaIII1 from Loxosceles arizonica (Arizona brown spider).